The chain runs to 1172 residues: Carbamoyl phosphate synthase arginine-specific large chain, chloroplastic (1172 aa).

The span at 1 to 10 shows a compositional bias: polar residues; that stretch reads MATSLSSAPT. The tract at residues 1–37 is disordered; the sequence is MATSLSSAPTQLRPSPSPSHHRLLHRSSLLPFPRRHH. The transit peptide at 1 to 50 directs the protein to the chloroplast; it reads MATSLSSAPTQLRPSPSPSHHRLLHRSSLLPFPRRHHHRRRRCGALSIAR. The tract at residues 72–473 is carboxyphosphate synthetic domain; that stretch reads GRLAGVRKIM…SFQKAVRSLE (402 aa). ATP-binding residues include R199, R240, G246, G247, K279, L281, E286, G312, V313, H314, Q356, and E370. The ATP-grasp 1 domain maps to 203–399; sequence KQAMDRIGLK…IAKMAAKLSV (197 aa). Residues Q356, E370, and N372 each coordinate Mg(2+). Residues 474 to 623 form an oligomerization domain region; sequence TGFAGWGCAP…YSSYEYECES (150 aa). The carbamoyl phosphate synthetic domain stretch occupies residues 624-1019; sequence VPTNKKKVLI…GAFAKAQIAA (396 aa). The ATP-grasp 2 domain maps to 761–954; that stretch reads NAILEELGIE…LAKYASLVMS (194 aa). The ATP site is built by R797, K836, L838, E843, G869, I870, H871, S872, Q912, and E925. Residues Q912, E925, and N927 each contribute to the Mg(2+) site. The allosteric domain stretch occupies residues 1020 to 1172; it reads GQKLPLNGTV…QNLQAAQSAS (153 aa). The MGS-like domain maps to 1021–1162; it reads QKLPLNGTVF…QDYFQTTDAS (142 aa).

This sequence belongs to the CarB family. As to quaternary structure, heterodimer composed of 2 chains; the small (or glutamine) chain promotes the hydrolysis of glutamine to ammonia, which is used by the large (or ammonia) chain to synthesize carbamoyl phosphate. Requires Mg(2+) as cofactor. Mn(2+) is required as a cofactor.

The protein localises to the plastid. It localises to the chloroplast. It carries out the reaction hydrogencarbonate + L-glutamine + 2 ATP + H2O = carbamoyl phosphate + L-glutamate + 2 ADP + phosphate + 2 H(+). The enzyme catalyses hydrogencarbonate + NH4(+) + 2 ATP = carbamoyl phosphate + 2 ADP + phosphate + 2 H(+). The protein operates within amino-acid biosynthesis; L-arginine biosynthesis; carbamoyl phosphate from bicarbonate: step 1/1. Functionally, large subunit of the arginine-specific carbamoyl phosphate synthase (CPSase). CPSase catalyzes the formation of carbamoyl phosphate from the ammonia moiety of glutamine, hydrogencarbonate, and phosphate donated by ATP, constituting the first step of 2 biosynthetic pathways, one leading to arginine and/or urea and the other to pyrimidine nucleotides. The large subunit (synthetase) binds the substrates ammonia (free or transferred from glutamine from the small subunit), hydrogencarbonate and ATP and carries out an ATP-coupled ligase reaction, activating hydrogencarbonate by forming carboxy phosphate which reacts with ammonia to form carbamoyl phosphate. In Oryza sativa subsp. japonica (Rice), this protein is Carbamoyl phosphate synthase arginine-specific large chain, chloroplastic (CARB).